The chain runs to 188 residues: UPF0157 protein DR_2534 (188 aa).

Gly residues predominate over residues 1–12 (MGRGGRGVGGGR). The tract at residues 1–37 (MGRGGRGVGGGRPEGHGASVEGGRTRQTEGMDLISPD) is disordered.

It belongs to the UPF0157 (GrpB) family.

The polypeptide is UPF0157 protein DR_2534 (Deinococcus radiodurans (strain ATCC 13939 / DSM 20539 / JCM 16871 / CCUG 27074 / LMG 4051 / NBRC 15346 / NCIMB 9279 / VKM B-1422 / R1)).